We begin with the raw amino-acid sequence, 541 residues long: MKSYTPYFMLLWSAVGIARAAKIIIVPPIMFESHLYIFKTLASALHERGHHTVLLLSEGRDIAPSNHYSLQRYPGIFNSTTSDAFLQSKMRNIFSGRLTAVELVDILDHYTKNCDMMVGNQALIQGLKKEKFDLLLVDPNDMCGFVIAHLLGVKYAVFSTGLWYPAEVGAPAPLAYVPEFNSLLTDRMNFLERMKNTGVYLISRIGVSFLVLPKYERIMQKYNLLPAKSMYDLVHGSSLWMLCTDVALEFPRPTLPNVVYVGGILTKPASPLPEDLQRWVSGAQEHGFVLVSFGAGVKYLSEDIANKLAGALGRLPQKVIWRFSGTKPKNLGNNTKLIEWLPQNDLLGHSNIRAFLSHGGLNSIFETMYHGVPVVGIPLFGDHYDTMTRVQAKGMGILLEWNTVTEGELYDALVKVINNPSYRQRAQKLSEIHKDQPGHPVNRTTYWIDYILRHDGARHLRSAVHQISFCQYFLLDIAFVLLLGAVLLYFILSYVTKFIYRKIKSLWSKNEHSTVNGHYQNGIRNGKYKGNGRVKHEKKVR.

The signal sequence occupies residues methionine 1 to alanine 20. Asparagine 78, asparagine 333, and asparagine 442 each carry an N-linked (GlcNAc...) asparagine glycan. A helical membrane pass occupies residues tyrosine 472–leucine 492. Positions histidine 518–arginine 541 are disordered. Residues glycine 526 to arginine 541 show a composition bias toward basic residues.

It belongs to the UDP-glycosyltransferase family.

The protein resides in the membrane. It localises to the endoplasmic reticulum. The catalysed reaction is an N-acylsphing-4-enine + UDP-alpha-D-galactose = a beta-D-galactosyl-(1&lt;-&gt;1')-N-acylsphing-4-enine + UDP + H(+). It carries out the reaction N-(2-hydroxy-hexanoyl)-sphing-4-enine + UDP-alpha-D-galactose = N-(2-hydroxy-hexanoyl)-beta-D-galactosyl-sphing-4-enine + UDP + H(+). It catalyses the reaction N-(2-hydroxy-hexanoyl)-sphinganine + UDP-alpha-D-galactose = N-(2-hydroxyhexanoyl)-beta-D-galactosylsphinganine + UDP + H(+). The enzyme catalyses an N-acyl-sphingoid base + UDP-alpha-D-galactose = a D-galactosylceramide + UDP + H(+). It participates in sphingolipid metabolism; galactosylceramide biosynthesis. Its function is as follows. Catalyzes the transfer of galactose to ceramide, a key enzymatic step in the biosynthesis of galactocerebrosides, which are abundant sphingolipids of the myelin membrane of the central nervous system and peripheral nervous system. Galactosylates both hydroxy- and non-hydroxy fatty acid-containing ceramides and diglycerides. The protein is 2-hydroxyacylsphingosine 1-beta-galactosyltransferase of Mus musculus (Mouse).